A 273-amino-acid chain; its full sequence is Salivary glue protein Sgs-3 (273 aa).

The first 23 residues, 1-23, serve as a signal peptide directing secretion; sequence MKLTIAISLASILLLSVAHVAQG. Residues 47-57 show a composition bias toward low complexity; sequence TTTTTTTTCAP. The tract at residues 47-225 is disordered; it reads TTTTTTTTCA…TPKPTNKPGC (179 aa). Over residues 58-67 the composition is skewed to pro residues; sequence PTRPPPPPCT. A compositionally biased stretch (low complexity) spans 83 to 225; that stretch reads RRTTTTTRQT…TPKPTNKPGC (143 aa).

This is Salivary glue protein Sgs-3 (Sgs3) from Drosophila yakuba (Fruit fly).